A 444-amino-acid polypeptide reads, in one-letter code: Protein Z-dependent protease inhibitor (444 aa).

The first 21 residues, 1–21, serve as a signal peptide directing secretion; sequence MKVVPSLLLSVLLAQVWLVPG. The tract at residues 24–65 is disordered; it reads PSPQSPETPAPQNQTSRVVQAPKEEEEDEQEASEEKASEEEK. A glycan (N-linked (GlcNAc...) asparagine) is linked at N36. Position 56 is a phosphoserine; by FAM20C (S56). Residues 56–65 are compositionally biased toward basic and acidic residues; sequence SEEKASEEEK. Positions 136–153 are heparin-binding; that stretch reads TKPGLLPSLFKGLRETLS. 3 N-linked (GlcNAc...) asparagine glycosylation sites follow: N180, N197, and N295.

Belongs to the serpin family. In terms of assembly, interacts with PROZ. Phosphorylated by FAM20C in the extracellular medium. As to expression, expressed by the liver and secreted in plasma.

It is found in the secreted. Functionally, inhibits activity of the coagulation protease factor Xa in the presence of PROZ, calcium and phospholipids. Also inhibits factor XIa in the absence of cofactors. The polypeptide is Protein Z-dependent protease inhibitor (SERPINA10) (Homo sapiens (Human)).